The chain runs to 272 residues: Protein alcS (272 aa).

Over residues 1 to 14 (MDTEQGLKNHTAKT) the composition is skewed to polar residues. The disordered stretch occupies residues 1–21 (MDTEQGLKNHTAKTSPHDETA). Transmembrane regions (helical) follow at residues 63 to 83 (PLAL…LMGW), 91 to 111 (IAFT…TSIL), 122 to 144 (VVFG…AFNA), 164 to 184 (FLNT…IFLA), 192 to 212 (VYVA…GAYW), and 225 to 245 (LVVA…YLLV).

Belongs to the acetate uptake transporter (AceTr) (TC 2.A.96) family.

It localises to the cell membrane. Its subcellular location is the cell septum. The protein is Protein alcS of Aspergillus fumigatus (strain CBS 144.89 / FGSC A1163 / CEA10) (Neosartorya fumigata).